A 428-amino-acid chain; its full sequence is Somatostatin receptor type 3 (428 aa).

Over residues methionine 1 to threonine 12 the composition is skewed to polar residues. The disordered stretch occupies residues methionine 1–serine 20. The Extracellular portion of the chain corresponds to methionine 1–glycine 45. Residues asparagine 18 and asparagine 31 are each glycosylated (N-linked (GlcNAc...) asparagine). A helical membrane pass occupies residues isoleucine 46–leucine 71. Topologically, residues arginine 72–serine 81 are cytoplasmic. A helical transmembrane segment spans residues valine 82–alanine 103. Residues glutamine 104 to arginine 118 are Extracellular-facing. Cysteine 117 and cysteine 192 form a disulfide bridge. Residues leucine 119–valine 140 form a helical membrane-spanning segment. The Cytoplasmic portion of the chain corresponds to aspartate 141–arginine 162. Residues threonine 163–phenylalanine 182 form a helical membrane-spanning segment. At serine 183–alanine 206 the chain is on the extracellular side. A helical membrane pass occupies residues phenylalanine 207 to valine 232. Over lysine 233–arginine 266 the chain is Cytoplasmic. A helical transmembrane segment spans residues methionine 267–valine 288. Over asparagine 289–glycine 302 the chain is Extracellular. A helical membrane pass occupies residues leucine 303–leucine 325. Over serine 326–leucine 428 the chain is Cytoplasmic. Residues serine 341, serine 346, and serine 351 each carry the phosphoserine modification. The disordered stretch occupies residues isoleucine 344–leucine 428. A Phosphothreonine modification is found at threonine 357. A compositionally biased stretch (acidic residues) spans threonine 357–glutamate 370. Over residues arginine 385–leucine 412 the composition is skewed to polar residues.

This sequence belongs to the G-protein coupled receptor 1 family. Homodimer and heterodimer with SSTR2. Heterodimerization with SSTR2 inactivates SSTR3 receptor function. In terms of processing, phosphorylated. Phosphorylation increases upon somatostatin binding. As to expression, in the brain, primarily observed in the forebrain. Moderate levels found throughout laminae 2-6 of the neocortex and allocortex, and high levels in lamina 2 of the piriform and entorhinal cortices. High levels also present in the cornu ammonis fields of the hippocampus. In the amygdala, highly expressed in the nucleus of the lateral olfactory tract with expression also detected in the rostral portions of the basal magnocellular and lateral nuclei. In the diencephalon, moderate levels observed in the ventromedial and arcuate nuclei of the hypothalamus. In the midbrain, moderate levels found in the lateral portion of the substantia nigra pars reticulata.

The protein resides in the cell membrane. In terms of biological role, receptor for somatostatin-14 and -28. This receptor is coupled via pertussis toxin sensitive G proteins to inhibition of adenylyl cyclase. This Mus musculus (Mouse) protein is Somatostatin receptor type 3 (Sstr3).